The sequence spans 122 residues: Acidic phospholipase A2 CTs-A3 (122 aa).

7 disulfide bridges follow: cysteine 26–cysteine 116, cysteine 28–cysteine 44, cysteine 43–cysteine 95, cysteine 49–cysteine 122, cysteine 50–cysteine 88, cysteine 57–cysteine 81, and cysteine 75–cysteine 86. Tyrosine 27, glycine 29, and glycine 31 together coordinate Ca(2+). The active site involves histidine 47. Residue aspartate 48 participates in Ca(2+) binding. The active site involves aspartate 89.

It depends on Ca(2+) as a cofactor. Expressed by the venom gland.

It localises to the secreted. It carries out the reaction a 1,2-diacyl-sn-glycero-3-phosphocholine + H2O = a 1-acyl-sn-glycero-3-phosphocholine + a fatty acid + H(+). Snake venom phospholipase A2 (PLA2) that shows a moderate inhibition of ADP-induced human platelet aggregation when tested on platelet rich plasma. Exhibits moderate hydrolytic activities and prefers the anionic micelles (dPPC with deoxycholate) to the zwitterionic micelles (dPPC with Triton X-100). PLA2 catalyzes the calcium-dependent hydrolysis of the 2-acyl groups in 3-sn-phosphoglycerides. The protein is Acidic phospholipase A2 CTs-A3 of Trimeresurus stejnegeri (Chinese green tree viper).